Consider the following 224-residue polypeptide: Proteasome subunit beta (224 aa).

A propeptide spans 1-6 (removed in mature form; by autocatalysis); sequence MDVMKG. Threonine 7 functions as the Nucleophile in the catalytic mechanism.

Belongs to the peptidase T1B family. In terms of assembly, the 20S proteasome core is composed of 14 alpha and 14 beta subunits that assemble into four stacked heptameric rings, resulting in a barrel-shaped structure. The two inner rings, each composed of seven catalytic beta subunits, are sandwiched by two outer rings, each composed of seven alpha subunits. The catalytic chamber with the active sites is on the inside of the barrel. Has a gated structure, the ends of the cylinder being occluded by the N-termini of the alpha-subunits. Is capped at one or both ends by the proteasome regulatory ATPase, PAN.

The protein resides in the cytoplasm. It catalyses the reaction Cleavage of peptide bonds with very broad specificity.. With respect to regulation, the formation of the proteasomal ATPase PAN-20S proteasome complex, via the docking of the C-termini of PAN into the intersubunit pockets in the alpha-rings, triggers opening of the gate for substrate entry. Interconversion between the open-gate and close-gate conformations leads to a dynamic regulation of the 20S proteasome proteolysis activity. Its function is as follows. Component of the proteasome core, a large protease complex with broad specificity involved in protein degradation. The sequence is that of Proteasome subunit beta from Methanocaldococcus fervens (strain DSM 4213 / JCM 15782 / AG86) (Methanococcus fervens).